We begin with the raw amino-acid sequence, 149 residues long: Transcriptional repressor NrdR (149 aa).

A zinc finger spans residues Cys-3–Cys-33. Residues Ile-48–Ser-138 form the ATP-cone domain.

Belongs to the NrdR family. Requires Zn(2+) as cofactor.

In terms of biological role, negatively regulates transcription of bacterial ribonucleotide reductase nrd genes and operons by binding to NrdR-boxes. In Fusobacterium nucleatum subsp. nucleatum (strain ATCC 25586 / DSM 15643 / BCRC 10681 / CIP 101130 / JCM 8532 / KCTC 2640 / LMG 13131 / VPI 4355), this protein is Transcriptional repressor NrdR.